The chain runs to 67 residues: Protein AaeX (67 aa).

Helical transmembrane passes span 10-30 and 43-63; these read FGLSFPPVFFVLLVSLTLFFV and FVWHPALFNSALFCCLFYLLF.

The protein belongs to the AaeX family.

The protein resides in the cell membrane. In Pectobacterium carotovorum subsp. carotovorum (strain PC1), this protein is Protein AaeX.